We begin with the raw amino-acid sequence, 483 residues long: NAD-dependent protein deacetylase SRT1 (483 aa).

The Deacetylase sirtuin-type domain maps to 27 to 270 (PELLHKKIEE…MYMMNLRIPP (244 aa)). NAD(+) is bound by residues 53-57 (AGIST), 63-65 (DFR), and 114-117 (QNVD). Histidine 134 (proton acceptor) is an active-site residue. Residues cysteine 142, cysteine 145, cysteine 167, and cysteine 172 each contribute to the Zn(2+) site. Residues 209 to 211 (GTS) and 235 to 237 (NLQ) contribute to the NAD(+) site.

It belongs to the sirtuin family. Class IV subfamily. Zn(2+) is required as a cofactor.

Its subcellular location is the nucleus. The enzyme catalyses N(6)-acetyl-L-lysyl-[protein] + NAD(+) + H2O = 2''-O-acetyl-ADP-D-ribose + nicotinamide + L-lysyl-[protein]. Its function is as follows. NAD-dependent protein deacetylase. Has deacetylase activity towards H3K9Ac. May have a function in the safeguard against genome instability and DNA damage to ensure plant cell growth. May negatively regulate metabolic signal transduction involving methanol and jasmonates during leaf senescence. Required for histone H3K9Ac deacetylation and repression of AP2-1/RSR1 and amylase genes during early seed development. Functions as an epigenetic regulator to repress the expression of glycolytic genes and glycolysis in seedlings. Reduces lysine acetylation of the glycolytic glyceraldehyde-3-phosphate dehydrogenase (GAPDH), which is found to also function as an activator of glycolytic gene expression. This chain is NAD-dependent protein deacetylase SRT1, found in Oryza sativa subsp. indica (Rice).